The chain runs to 192 residues: Cytidylate kinase (192 aa).

Glycine 7–threonine 15 provides a ligand contact to ATP.

The protein belongs to the cytidylate kinase family. Type 2 subfamily.

The protein localises to the cytoplasm. It catalyses the reaction CMP + ATP = CDP + ADP. It carries out the reaction dCMP + ATP = dCDP + ADP. The chain is Cytidylate kinase from Natronomonas pharaonis (strain ATCC 35678 / DSM 2160 / CIP 103997 / JCM 8858 / NBRC 14720 / NCIMB 2260 / Gabara) (Halobacterium pharaonis).